Here is a 170-residue protein sequence, read N- to C-terminus: Elicitin-like protein 1 (170 aa).

An N-terminal signal peptide occupies residues 1 to 19; the sequence is MFSKTLVVLAAVAAVTVNG. Intrachain disulfides connect C25/C91, C47/C76, and C71/C118. Positions 122–170 are disordered; the sequence is GGGSTPTTAPPTSTTPTTAPPTGTTPTTAPPAGTTPGVTPSPTTPKPAC. The segment covering 126–162 has biased composition (low complexity); it reads TPTTAPPTSTTPTTAPPTGTTPTTAPPAGTTPGVTPS.

Belongs to the elicitin family.

It localises to the secreted. Functionally, induces local and distal defense responses (incompatible hypersensitive reaction) in plants from the solanaceae and cruciferae families. Elicits leaf necrosis and causes the accumulation of pathogenesis-related proteins. Might interact with the lipidic molecules of the plasma membrane. The protein is Elicitin-like protein 1 (POD-1) of Pythium oligandrum (Mycoparasitic fungus).